A 191-amino-acid polypeptide reads, in one-letter code: MKTEDFRDNEYLEEYLKELWGNGANIAIAKLNDLINWGRSNSVWPLTFATSCCGIEFMCLGAARYDFARFGWEVTRNSPRQADVVFCCGTIVHKMAPVLKRLYDQMSEPKYVIALGSCAISGGPFKSSYHTIMGIDKIIPVDVYIPGCPPRPDAMIYGMIQLARKIKVQNFFKLPNLSHIEGNSLKKGERQ.

4 residues coordinate [4Fe-4S] cluster: cysteine 52, cysteine 53, cysteine 118, and cysteine 148.

The protein belongs to the complex I 20 kDa subunit family. As to quaternary structure, NDH-1 is composed of 14 different subunits. Subunits NuoB, C, D, E, F, and G constitute the peripheral sector of the complex. [4Fe-4S] cluster is required as a cofactor.

Its subcellular location is the cell inner membrane. It catalyses the reaction a quinone + NADH + 5 H(+)(in) = a quinol + NAD(+) + 4 H(+)(out). Its function is as follows. NDH-1 shuttles electrons from NADH, via FMN and iron-sulfur (Fe-S) centers, to quinones in the respiratory chain. The immediate electron acceptor for the enzyme in this species is believed to be a menaquinone. Couples the redox reaction to proton translocation (for every two electrons transferred, four hydrogen ions are translocated across the cytoplasmic membrane), and thus conserves the redox energy in a proton gradient. The sequence is that of NADH-quinone oxidoreductase subunit B from Azobacteroides pseudotrichonymphae genomovar. CFP2.